Here is a 364-residue protein sequence, read N- to C-terminus: Phosrestin-2 (364 aa).

Belongs to the arrestin family. Phosphorylated, but does not undergo light-induced phosphorylation. As to expression, expressed specifically and abundantly in photoreceptor cells in retina and ocelli.

The protein resides in the cell projection. It is found in the rhabdomere. Functionally, regulates photoreceptor cell deactivation. Arr1 and Arr2 proteins are mediators of rhodopsin inactivation and are essential for the termination of the phototransduction cascade. Involved in regulating normal cycles of per nuclear accumulation in brain circadian neurons and thus is important for normal circadian behavior. In the dark, functions with Arr2 to promote the formation of cytosolic Bdbt foci, which are required for dco localization to photoreceptor nuclei where it phosphorylates and activates degradation of per. The polypeptide is Phosrestin-2 (Arr1) (Drosophila melanogaster (Fruit fly)).